We begin with the raw amino-acid sequence, 167 residues long: Putative C-type lectin protein FPV008/FPV253 (167 aa).

The 104-residue stretch at 49 to 152 (CPDEWIGYNS…SCIFHERTIC (104 aa)) folds into the C-type lectin domain. Disulfide bonds link Cys77-Cys152 and Cys131-Cys144.

This Vertebrata (FPV) protein is Putative C-type lectin protein FPV008/FPV253.